The chain runs to 94 residues: Defensin-like protein 21 (94 aa).

The first 26 residues, 1–26 (MVRTNVVSFVLFAAIVLCIGSIQIDG), serve as a signal peptide directing secretion. 4 disulfides stabilise this stretch: cysteine 41/cysteine 92, cysteine 51/cysteine 79, cysteine 65/cysteine 88, and cysteine 69/cysteine 90.

This sequence belongs to the DEFL family.

It localises to the secreted. In Arabidopsis thaliana (Mouse-ear cress), this protein is Defensin-like protein 21.